Reading from the N-terminus, the 60-residue chain is Large ribosomal subunit protein bL32 (60 aa).

The interval 1-36 (MAVQQNKKSPSKRGMHRSHNALNTPGLAIEPTTGET) is disordered. The span at 9–19 (SPSKRGMHRSH) shows a compositional bias: basic residues.

The protein belongs to the bacterial ribosomal protein bL32 family.

The sequence is that of Large ribosomal subunit protein bL32 from Methylibium petroleiphilum (strain ATCC BAA-1232 / LMG 22953 / PM1).